The following is a 901-amino-acid chain: Pyruvate, phosphate dikinase (901 aa).

Positions Met-1–Ala-321 are N-terminal. The linker 1 stretch occupies residues Lys-322–Val-380. Residues Pro-381–Leu-482 are central. Ser-440 carries the phosphoserine; by PDRP1 modification. The active-site Tele-phosphohistidine intermediate is His-442. The segment at Asn-483–Ser-522 is linker 2. Residues Phe-523–Arg-901 form a C-terminal region. The substrate site is built by Arg-550, Arg-606, Glu-750, Gly-771, Thr-772, Asn-773, and Asp-774. Glu-750 is a Mg(2+) binding site. Asp-774 contacts Mg(2+). The Proton donor role is filled by Cys-835. The tract at residues Glu-879–Arg-901 is disordered.

The protein belongs to the PEP-utilizing enzyme family. Homodimer. Mg(2+) is required as a cofactor. Phosphorylation of Ser-440 in the dark inactivates the enzyme. Dephosphorylation upon light stimulation reactivates the enzyme.

It carries out the reaction pyruvate + phosphate + ATP = phosphoenolpyruvate + AMP + diphosphate + H(+). Its activity is regulated as follows. Activated by light-induced dephosphorylation. Inhibited by dark-induced phosphorylation. Both reactions are catalyzed by PDRP1. In terms of biological role, catalyzes the reversible phosphorylation of pyruvate and phosphate. This is Pyruvate, phosphate dikinase (ppdK) from Treponema pallidum (strain Nichols).